Here is a 435-residue protein sequence, read N- to C-terminus: Putrescine transporter PotE (435 aa).

Helical transmembrane passes span 8-28, 39-59, 95-115, 117-137, 148-168, 185-205, 224-244, 275-295, 320-340, 354-374, 386-406, and 409-429; these read IGVV…GIIM, ISIV…YAFA, LVIA…ELFG, ILSP…ATVL, ISSF…IIGW, VPTF…FLGL, IAVL…TNVI, VIMG…QFTI, APVV…LMTI, LAVV…AVLL, TTVF…YAAG, and AMLY…FVSY.

The protein belongs to the amino acid-polyamine-organocation (APC) superfamily. Basic amino acid/polyamine antiporter (APA) (TC 2.A.3.2) family.

The protein localises to the cell inner membrane. The enzyme catalyses putrescine(in) + H(+)(in) = putrescine(out) + H(+)(out). It catalyses the reaction putrescine(in) + L-ornithine(out) = putrescine(out) + L-ornithine(in). Its function is as follows. Catalyzes both the uptake and excretion of putrescine. The uptake of putrescine is dependent on the membrane potential and the excretion involves putrescine-ornithine antiporter activity. This Haemophilus influenzae (strain ATCC 51907 / DSM 11121 / KW20 / Rd) protein is Putrescine transporter PotE.